The sequence spans 283 residues: MAEASDLLEWPKKDNRRFLHVVYRVGDLDRTIEFYTEVFGMKLLRKRDIPEEKYSNAFLGFGPETSNFVVELTYNYGVSSYDIGTGFGHFAISTQDVSKLVENVRAKGGNVTREPGPVKGGGSVIAFVKDPDGYTFELIQRGPTPEPFCQVMLRVGDLDRAIKFYEKALGMRLLRKIERPEYKYTIGMMGYAEEYESIVLELTYNYDVTEYTKGNAYAQIAIGTDDVYKSGEVIKIVNQELGGKITREAGPLPGLGTKIVSFLDPDGWKTVLVDNKDFLKELE.

Residue alanine 2 is modified to N-acetylalanine. 2 VOC domains span residues 17-141 (RFLH…LIQR) and 147-275 (PFCQ…LVDN). Histidine 20 lines the Zn(2+) pocket. Arginine 24 contributes to the substrate binding site. Glutamate 71 contributes to the Zn(2+) binding site. Substrate-binding residues include asparagine 75 and histidine 89. Residues histidine 89, glutamate 137, and glutamine 150 each coordinate Zn(2+). The active-site Proton donor/acceptor is glutamate 137. Residues glutamine 150 and arginine 154 each contribute to the substrate site. Glutamine 150 contacts a divalent metal cation. Position 201 (glutamate 201) interacts with Zn(2+). An a divalent metal cation-binding site is contributed by glutamate 201. A substrate-binding site is contributed by asparagine 205. Glutamine 219 serves as a coordination point for a divalent metal cation. 251–252 (PL) contacts substrate. Residue valine 271 participates in a divalent metal cation binding.

Belongs to the glyoxalase I family. In terms of assembly, homodimer. Zn(2+) serves as cofactor. Phosphorylated by SnRK2.8.

It catalyses the reaction (R)-S-lactoylglutathione = methylglyoxal + glutathione. The protein operates within secondary metabolite metabolism; methylglyoxal degradation; (R)-lactate from methylglyoxal: step 1/2. Its function is as follows. Catalyzes the conversion of hemimercaptal, formed from methylglyoxal and glutathione, to S-lactoylglutathione. The sequence is that of Lactoylglutathione lyase GLX1 from Arabidopsis thaliana (Mouse-ear cress).